Consider the following 66-residue polypeptide: U1-theraphotoxin-Cg1b (66 aa).

An N-terminal signal peptide occupies residues 1 to 21; it reads MKTSALFVIFGLVLLFCNSFA. Residues 22–29 constitute a propeptide that is removed on maturation; that stretch reads AELKTTGR. Intrachain disulfides connect C31–C46, C38–C51, and C45–C58.

It belongs to the neurotoxin 10 (Hwtx-1) family. 46 (Jztx-7/10/12) subfamily. Expressed by the venom gland.

The protein resides in the secreted. In terms of biological role, probable ion channel inhibitor. This Chilobrachys guangxiensis (Chinese earth tiger tarantula) protein is U1-theraphotoxin-Cg1b.